Reading from the N-terminus, the 916-residue chain is Protein translocase subunit SecA (916 aa).

Residues Gln-88, 106 to 110 (GEGKT), and Asp-519 each bind ATP. Zn(2+) contacts are provided by Cys-902, Cys-904, Cys-913, and Cys-914.

The protein belongs to the SecA family. In terms of assembly, monomer and homodimer. Part of the essential Sec protein translocation apparatus which comprises SecA, SecYEG and auxiliary proteins SecDF. Other proteins may also be involved. Requires Zn(2+) as cofactor.

Its subcellular location is the cell inner membrane. The protein resides in the cytoplasm. It catalyses the reaction ATP + H2O + cellular proteinSide 1 = ADP + phosphate + cellular proteinSide 2.. Functionally, part of the Sec protein translocase complex. Interacts with the SecYEG preprotein conducting channel. Has a central role in coupling the hydrolysis of ATP to the transfer of proteins into and across the cell membrane, serving as an ATP-driven molecular motor driving the stepwise translocation of polypeptide chains across the membrane. This Treponema pallidum (strain Nichols) protein is Protein translocase subunit SecA.